The chain runs to 394 residues: Venom metalloproteinase antarease TserMP_A (394 aa).

Residues 1–16 form the signal peptide; the sequence is MISYLASIFLLATVSA. A propeptide spanning residues 17-157 is cleaved from the precursor; it reads VPSGRVEVVF…NAENVSRMAR (141 aa). In terms of domain architecture, Peptidase M12B spans 162 to 391; that stretch reads IVVEYYIVTD…PTASCIFQQC (230 aa). A disulfide bridge links Cys295 with Cys386. His319 is a binding site for Zn(2+). The active site involves Glu320. Zn(2+)-binding residues include His323 and His329.

It depends on Zn(2+) as a cofactor. Post-translationally, contains 4 disulfide bonds. In terms of tissue distribution, expressed by the venom gland.

It localises to the secreted. Inhibited by EDTA. In terms of biological role, acts as a metalloprotease. Penetrates intact tissue and specifically cleaves the vesicle-associated membrane protein 2 (VAMP2) (part of the SNARE complex) involved in pancreatic secretion, thus disrupting the normal vesicular traffic. This chain is Venom metalloproteinase antarease TserMP_A, found in Tityus serrulatus (Brazilian scorpion).